We begin with the raw amino-acid sequence, 111 residues long: Universal stress protein B (111 aa).

2 helical membrane-spanning segments follow: residues 1-21 (MIST…NMAR) and 90-110 (FILT…LLIW).

The protein belongs to the universal stress protein B family.

Its subcellular location is the cell inner membrane. This chain is Universal stress protein B, found in Enterobacter sp. (strain 638).